A 413-amino-acid polypeptide reads, in one-letter code: Glucose-1-phosphate adenylyltransferase (413 aa).

Residues tyrosine 102, glycine 167, 182 to 183 (EK), and serine 200 contribute to the alpha-D-glucose 1-phosphate site.

This sequence belongs to the bacterial/plant glucose-1-phosphate adenylyltransferase family. As to quaternary structure, homotetramer.

It catalyses the reaction alpha-D-glucose 1-phosphate + ATP + H(+) = ADP-alpha-D-glucose + diphosphate. It functions in the pathway glycan biosynthesis; glycogen biosynthesis. Involved in the biosynthesis of ADP-glucose, a building block required for the elongation reactions to produce glycogen. Catalyzes the reaction between ATP and alpha-D-glucose 1-phosphate (G1P) to produce pyrophosphate and ADP-Glc. The protein is Glucose-1-phosphate adenylyltransferase of Deinococcus radiodurans (strain ATCC 13939 / DSM 20539 / JCM 16871 / CCUG 27074 / LMG 4051 / NBRC 15346 / NCIMB 9279 / VKM B-1422 / R1).